A 355-amino-acid chain; its full sequence is Thiamine thiazole synthase, chloroplastic (355 aa).

The N-terminal 42 residues, 1 to 42, are a transit peptide targeting the chloroplast; it reads MAAMATTASSLLKTSFAGARLPAAARNPTVSVAPRTGGAICN. Residues Ala-96, 116 to 117, Gly-124, and Val-189 contribute to the substrate site; that span reads EQ. A 2,3-didehydroalanine (Cys) modification is found at Cys-218. Residues Asp-220, His-235, Met-287, and 297–299 each bind substrate; that span reads RMG.

The protein belongs to the THI4 family. In terms of assembly, homooctamer. The cofactor is Fe cation. Post-translationally, during the catalytic reaction, a sulfide is transferred from Cys-218 to a reaction intermediate, generating a dehydroalanine residue.

The protein resides in the plastid. The protein localises to the chloroplast. The catalysed reaction is [ADP-thiazole synthase]-L-cysteine + glycine + NAD(+) = [ADP-thiazole synthase]-dehydroalanine + ADP-5-ethyl-4-methylthiazole-2-carboxylate + nicotinamide + 3 H2O + 2 H(+). Involved in biosynthesis of the thiamine precursor thiazole. Catalyzes the conversion of NAD and glycine to adenosine diphosphate 5-(2-hydroxyethyl)-4-methylthiazole-2-carboxylic acid (ADT), an adenylated thiazole intermediate. The reaction includes an iron-dependent sulfide transfer from a conserved cysteine residue of the protein to a thiazole intermediate. The enzyme can only undergo a single turnover, which suggests it is a suicide enzyme. May have additional roles in adaptation to various stress conditions and in DNA damage tolerance. Required fot thiamine accumulation and disease resistance toward the bacterial pathogen Xanthomonas oryzae pv oryzae (Xoo) and the fungal pathogen Magnaporthe oryzae. During infection by Xoo, functions positively in the defense pathway initiated by the resistance genes XA3 and XA26 by promoting thiamine synthesis. May function upstream of the defense-related proteins peroxidases, phenylalanine ammonia-lyases and pathogenesis-related proteins. In terms of biological role, (Microbial infection) During infection by Xanthomonas oryzae pv oryzae (Xoo), THI1 interacts with the type III effector virulence factor xadA from Xoo, which is an adhesin-like outer membrane protein. This probably attenuates the function of THI1 in defense response. This chain is Thiamine thiazole synthase, chloroplastic, found in Oryza sativa subsp. japonica (Rice).